Here is a 96-residue protein sequence, read N- to C-terminus: MLCSIYKSSKKEGTYLYIPKKDDFSQVPDALMQMFGKPSFVMVIKMDGRKLAQVNIDKVRESLNTDGFFLQVPPPPVNELELHKERKAQQNVQDEE.

In terms of domain architecture, YcgL spans 1–84 (MLCSIYKSSK…PPVNELELHK (84 aa)).

This is YcgL domain-containing protein VS_0884 from Vibrio atlanticus (strain LGP32) (Vibrio splendidus (strain Mel32)).